A 219-amino-acid polypeptide reads, in one-letter code: NAD(P)H-quinone oxidoreductase subunit I (219 aa).

4Fe-4S ferredoxin-type domains are found at residues 55-84 (GRIH…VDWV) and 95-124 (RNYS…MTEE). [4Fe-4S] cluster is bound by residues Cys-64, Cys-67, Cys-70, Cys-74, Cys-104, Cys-107, Cys-110, and Cys-114. The interval 192–219 (LKAAGSMKAAEDERESSSSASNMEESAG) is disordered. A compositionally biased stretch (low complexity) spans 208–219 (SSSASNMEESAG).

Belongs to the complex I 23 kDa subunit family. In terms of assembly, NDH-1 is composed of at least 11 different subunits. [4Fe-4S] cluster serves as cofactor.

The protein resides in the cellular thylakoid membrane. It carries out the reaction a plastoquinone + NADH + (n+1) H(+)(in) = a plastoquinol + NAD(+) + n H(+)(out). It catalyses the reaction a plastoquinone + NADPH + (n+1) H(+)(in) = a plastoquinol + NADP(+) + n H(+)(out). Its function is as follows. NDH-1 shuttles electrons from an unknown electron donor, via FMN and iron-sulfur (Fe-S) centers, to quinones in the respiratory and/or the photosynthetic chain. The immediate electron acceptor for the enzyme in this species is believed to be plastoquinone. Couples the redox reaction to proton translocation, and thus conserves the redox energy in a proton gradient. The sequence is that of NAD(P)H-quinone oxidoreductase subunit I from Synechococcus sp. (strain CC9311).